A 62-amino-acid polypeptide reads, in one-letter code: Disintegrin schistatin-like subunit A (62 aa).

Residues 1–62 (SVNPCCDPVI…TTDCPRNRYN (62 aa)) enclose the Disintegrin domain. 4 disulfide bridges follow: Cys5–Cys28, Cys19–Cys25, Cys24–Cys49, and Cys37–Cys56. The short motif at 41-43 (RGD) is the Cell attachment site element.

The protein belongs to the disintegrin family. Dimeric disintegrin subfamily. In terms of assembly, heterodimer with subunit B; disulfide-linked. As to expression, expressed by the venom gland.

Its subcellular location is the secreted. Its function is as follows. May bind to both alpha-IIb/beta-3 (ITGA2B/ITGB3) and alpha-V/beta-3 (ITGAV/ITGB3) integrins, and may inhibit platelet aggregation. The polypeptide is Disintegrin schistatin-like subunit A (Echis carinatus (Saw-scaled viper)).